The sequence spans 175 residues: 6,7-dimethyl-8-ribityllumazine synthase (175 aa).

Residues Phe-24, 58–60 (ALE), and 82–84 (AVI) contribute to the 5-amino-6-(D-ribitylamino)uracil site. 87–88 (ET) is a (2S)-2-hydroxy-3-oxobutyl phosphate binding site. Residue His-90 is the Proton donor of the active site. Residue Asn-115 coordinates 5-amino-6-(D-ribitylamino)uracil. Residue Arg-129 coordinates (2S)-2-hydroxy-3-oxobutyl phosphate. Residues 150 to 175 (ALEPEEDDEDEDDEDEDFDDEEDDGR) are disordered. The segment covering 152-175 (EPEEDDEDEDDEDEDFDDEEDDGR) has biased composition (acidic residues).

It belongs to the DMRL synthase family.

It catalyses the reaction (2S)-2-hydroxy-3-oxobutyl phosphate + 5-amino-6-(D-ribitylamino)uracil = 6,7-dimethyl-8-(1-D-ribityl)lumazine + phosphate + 2 H2O + H(+). It participates in cofactor biosynthesis; riboflavin biosynthesis; riboflavin from 2-hydroxy-3-oxobutyl phosphate and 5-amino-6-(D-ribitylamino)uracil: step 1/2. Functionally, catalyzes the formation of 6,7-dimethyl-8-ribityllumazine by condensation of 5-amino-6-(D-ribitylamino)uracil with 3,4-dihydroxy-2-butanone 4-phosphate. This is the penultimate step in the biosynthesis of riboflavin. This chain is 6,7-dimethyl-8-ribityllumazine synthase, found in Bordetella bronchiseptica (strain ATCC BAA-588 / NCTC 13252 / RB50) (Alcaligenes bronchisepticus).